The chain runs to 436 residues: 3-ketoacyl-CoA thiolase (436 aa).

Cys99 (acyl-thioester intermediate) is an active-site residue. Active-site proton acceptor residues include His392 and Cys422.

Belongs to the thiolase-like superfamily. Thiolase family. Heterotetramer of two alpha chains (FadJ) and two beta chains (FadI).

The protein localises to the cytoplasm. It catalyses the reaction an acyl-CoA + acetyl-CoA = a 3-oxoacyl-CoA + CoA. Its pathway is lipid metabolism; fatty acid beta-oxidation. Functionally, catalyzes the final step of fatty acid oxidation in which acetyl-CoA is released and the CoA ester of a fatty acid two carbons shorter is formed. This chain is 3-ketoacyl-CoA thiolase, found in Yersinia pseudotuberculosis serotype O:1b (strain IP 31758).